Reading from the N-terminus, the 211-residue chain is MISRMEKMTMMMKILIMFALGMNYWSCSGFPVYDYDPSSLRDALSASVVKVNSQSLSPYLFRAFRSSLKRVEVLDENNLVMNLEFSIRETTCRKDSGEDPATCAFQRDYYVSTAVCRSTVKVSAQQVQGVHARCSWSSSTSESYSSEEMIFGDMLGSHKWRNNYLFGLISDESISEQFYDRSLGIMRRVLPPGNRRYPNHRHRARINTDFE.

A signal peptide spans 1 to 29; it reads MISRMEKMTMMMKILIMFALGMNYWSCSG. 2 disulfides stabilise this stretch: Cys92–Cys103 and Cys116–Cys134. At Ser96 the chain carries Phosphoserine. Residues Ser145, Ser146, Ser170, Ser173, and Ser182 each carry the phosphoserine modification.

It belongs to the SPP2 family. Phosphorylation sites are present in the extracellular medium. In terms of tissue distribution, detected in liver and plasma.

It localises to the secreted. Could coordinate an aspect of bone turnover. The chain is Secreted phosphoprotein 24 (SPP2) from Homo sapiens (Human).